We begin with the raw amino-acid sequence, 274 residues long: Putative homeobox protein Meis3-like 1 (274 aa).

The region spanning 12–65 (GGDVCSSDSFNEDNTAFAKQVRSERPFFSSNPELDNLMIQAIQVLRFHLLELEK) is the MEIS N-terminal domain. 2 disordered regions span residues 108–167 (DSGS…KRGI) and 228–248 (NRTG…GYTE). The span at 123–135 (GLASQSGDNSSDQ) shows a compositional bias: polar residues. The homeobox DNA-binding region spans 161 to 223 (RNKKRGIFPK…NARRRIVQPM (63 aa)).

The protein belongs to the TALE/MEIS homeobox family.

Its subcellular location is the nucleus. The protein is Putative homeobox protein Meis3-like 1 (MEIS3P1) of Homo sapiens (Human).